The primary structure comprises 430 residues: Asparagine--tRNA ligase (430 aa).

It belongs to the class-II aminoacyl-tRNA synthetase family. Homodimer.

It is found in the cytoplasm. The catalysed reaction is tRNA(Asn) + L-asparagine + ATP = L-asparaginyl-tRNA(Asn) + AMP + diphosphate + H(+). This chain is Asparagine--tRNA ligase, found in Listeria innocua serovar 6a (strain ATCC BAA-680 / CLIP 11262).